Consider the following 92-residue polypeptide: Small ribosomal subunit protein uS19c (92 aa).

This sequence belongs to the universal ribosomal protein uS19 family.

The protein resides in the plastid. Its subcellular location is the chloroplast. Protein S19 forms a complex with S13 that binds strongly to the 16S ribosomal RNA. This chain is Small ribosomal subunit protein uS19c, found in Phalaenopsis aphrodite subsp. formosana (Moth orchid).